The primary structure comprises 393 residues: Fasciculation and elongation protein zeta-1 (393 aa).

A disordered region spans residues 1-41 (MEAPLVSLDEEFEDIRPCCTEDPEEKPQSLYGTSPHHLEDP). The residue at position 58 (Ser58) is a Phosphoserine. The disordered stretch occupies residues 130–154 (NGNSSDTEIHEKEEEDEFIEKSEND). Residues 231 to 299 (SELTELLDQV…KKRRKEKGLS (69 aa)) adopt a coiled-coil conformation. A phosphoserine mark is found at Ser299 and Ser317.

Belongs to the zygin family. Homodimer. Interacts with UBE4B and SAP30L. Interacts with SCOC and ULK1; SCOC interferes with ULK1-binding to FEZ1. Directly interacts with SCOC and UVRAG. Stabilizes the interaction between SCOC and UVRAG during amino acid starvation. Interacts with the NH2-terminal variable region (V1) of PKC zeta and weakly with that of PKC epsilon. In terms of processing, phosphorylated by protein kinase C zeta; which enhances interaction with UBE4B and polyubiquitination. Polyubiquitinated in a UBE4B-dependent manner; which does not lead to proteasomal degradation and may be important for neurogenic activity. Polyubiquitin linkage seems to be mainly through Lys-26. As to expression, brain.

It is found in the cytoplasm. It localises to the cytoskeleton. Its subcellular location is the microtubule organizing center. The protein localises to the centrosome. The protein resides in the cell membrane. Functionally, may be involved in axonal outgrowth as component of the network of molecules that regulate cellular morphology and axon guidance machinery. May participate in the transport of mitochondria and other cargos along microtubules. The chain is Fasciculation and elongation protein zeta-1 (Fez1) from Rattus norvegicus (Rat).